Here is a 1383-residue protein sequence, read N- to C-terminus: DNA-directed RNA polymerase subunit beta (1383 aa).

Belongs to the RNA polymerase beta chain family. The RNAP catalytic core consists of 2 alpha, 1 beta, 1 beta' and 1 omega subunit. When a sigma factor is associated with the core the holoenzyme is formed, which can initiate transcription.

The enzyme catalyses RNA(n) + a ribonucleoside 5'-triphosphate = RNA(n+1) + diphosphate. Functionally, DNA-dependent RNA polymerase catalyzes the transcription of DNA into RNA using the four ribonucleoside triphosphates as substrates. This is DNA-directed RNA polymerase subunit beta from Bartonella bacilliformis (strain ATCC 35685 / KC583 / Herrer 020/F12,63).